The primary structure comprises 511 residues: MASDSSFPGASSNVAEYSVSEISGALKRTVEDTFGHVRVRGEISGYRGPHSSGHAYFALKDDRARLEAVIWRGSMSRLRFRPEEGMEVIATGKLTTYPGSSKYQIVIEQMEPAGAGALMALLEERKQRLAAEGLFDPALKQLLPFMPRVIGVVTSPTGAVIRDIIHRISDRYPLRVIVWPVRVQGDTCGPEVATAVNGFNTLPDDGPIPRPDVLIVARGGGSLEDLWGFNDEIVVRAVAASHIPVISAVGHETDWTLIDLAADMRAPTPTGAAEMAVPVKADLQASLASQSARLSSAMSRFFDQKRQAHRAAARAMPSADQLLALPRRRFDEAASRLTRALFVNTQKKRVHFDGHARQLSPRLLQRRLVELERGVTMLGQRLPRALEAFLRERRTAFTHRANRLSPEPILRRTRLTGSTLEQLDRRRDQAVRLLIERVKRRSQELDRLMRTLSYESVLERGFAVVFDAQGKPVKQAAAVLPGDALSVRFRDGDVGVVARAGLTIPDPTKGQ.

This sequence belongs to the XseA family. In terms of assembly, heterooligomer composed of large and small subunits.

The protein resides in the cytoplasm. It catalyses the reaction Exonucleolytic cleavage in either 5'- to 3'- or 3'- to 5'-direction to yield nucleoside 5'-phosphates.. Its function is as follows. Bidirectionally degrades single-stranded DNA into large acid-insoluble oligonucleotides, which are then degraded further into small acid-soluble oligonucleotides. The sequence is that of Exodeoxyribonuclease 7 large subunit from Brucella suis biovar 1 (strain 1330).